Reading from the N-terminus, the 133-residue chain is Norrin (133 aa).

The signal sequence occupies residues 1–24 (MRKHVLAASFSMLSLLVIMGDTDS). Intrachain disulfides connect C39–C96, C55–C110, C65–C126, and C69–C128. The region spanning 39–132 (CMRHHYVDSI…ILSCHCEECN (94 aa)) is the CTCK domain.

In terms of assembly, homodimer; disulfide-linked. Component of a complex, at least composed of TSPAN12, FZD4, LRP5/6 and norrin (NDP). Binds FZD4 with high affinity. Interacts with LRP6 (via Beta-propellers 1 and 2). In terms of tissue distribution, expressed in the outer nuclear, inner nuclear and ganglion cell layers of the retina, and in fetal and adult brain.

It localises to the secreted. Its function is as follows. Activates the canonical Wnt signaling pathway through FZD4 and LRP5 coreceptor. Plays a central role in retinal vascularization by acting as a ligand for FZD4 that signals via stabilizing beta-catenin (CTNNB1) and activating LEF/TCF-mediated transcriptional programs. Acts in concert with TSPAN12 to activate FZD4 independently of the Wnt-dependent activation of FZD4, suggesting the existence of a Wnt-independent signaling that also promote accumulation the beta-catenin (CTNNB1). May be involved in a pathway that regulates neural cell differentiation and proliferation. Possible role in neuroectodermal cell-cell interaction. In Homo sapiens (Human), this protein is Norrin (NDP).